Here is a 414-residue protein sequence, read N- to C-terminus: GPI mannosyltransferase 1 (414 aa).

A run of 10 helical transmembrane segments spans residues 6-26, 87-107, 119-139, 149-171, 183-203, 213-233, 282-302, 316-336, 356-376, and 387-407; these read ISHI…FGLY, YIFM…LSGI, IIML…STRG, IMLS…WLGL, LPSI…VPIV, FLIT…SIYG, MEKF…PLLF, FAFV…FLIF, IVAL…AYQL, and GLLF…SVFI.

Belongs to the PIGM family.

The protein resides in the endoplasmic reticulum membrane. It participates in glycolipid biosynthesis; glycosylphosphatidylinositol-anchor biosynthesis. Mannosyltransferase involved in glycosylphosphatidylinositol-anchor biosynthesis. Transfers the first alpha-1,4-mannose to GlcN-acyl-PI during GPI precursor assembly. Required for cell wall integrity. The chain is GPI mannosyltransferase 1 (GPI14) from Debaryomyces hansenii (strain ATCC 36239 / CBS 767 / BCRC 21394 / JCM 1990 / NBRC 0083 / IGC 2968) (Yeast).